The following is a 469-amino-acid chain: UDP-N-acetylmuramate--L-alanine ligase (469 aa).

113 to 119 (GSHGKTT) provides a ligand contact to ATP.

This sequence belongs to the MurCDEF family.

The protein resides in the cytoplasm. The catalysed reaction is UDP-N-acetyl-alpha-D-muramate + L-alanine + ATP = UDP-N-acetyl-alpha-D-muramoyl-L-alanine + ADP + phosphate + H(+). It participates in cell wall biogenesis; peptidoglycan biosynthesis. In terms of biological role, cell wall formation. This is UDP-N-acetylmuramate--L-alanine ligase from Sorangium cellulosum (strain So ce56) (Polyangium cellulosum (strain So ce56)).